The primary structure comprises 799 residues: DISARM protein DrmE (799 aa).

Its subcellular location is the cytoplasm. Functionally, component of antiviral defense system DISARM (defense island system associated with restriction-modification), composed of DrmE, DrmA, DrmB, DrmC and DrmMII. DISARM is probably a multi-gene restriction module, this subunit has an unknown function. Expression of DISARM in B.subtilis (strain BEST7003) confers resistance to phages Nf, phi29, phi105, phi3T, SPO1, SPR and SPP1. Protection is over 10(7)-fold against phi3T, 10(4)-10(5)-fold against Nf, phi29, phi105 and SPR, 100-fold against SPO1 and 10-fold against SPP1. DISARM does not interfere with phage adsorption, but instead interferes with (phi3T) DNA replication early in its cycle, preventing replication, circularization and lysogeny and probably causes phage DNA degradation (DNA is degraded in SPP1-infected cells). The protein is DISARM protein DrmE of Bacillus paralicheniformis (strain ATCC 9945a / NCIMB 11709 / CD-2).